Consider the following 332-residue polypeptide: Probable isoaspartyl peptidase/L-asparaginase CG7860 (332 aa).

Catalysis depends on Thr188, which acts as the Nucleophile. Substrate contacts are provided by residues 216–219 (RIGD) and 239–242 (TGHG).

Belongs to the Ntn-hydrolase family. In terms of assembly, heterodimer of an alpha and beta chain produced by autocleavage. Post-translationally, cleaved into an alpha and beta chain by autocatalysis; this activates the enzyme. The N-terminal residue of the beta subunit is responsible for the nucleophile hydrolase activity.

It carries out the reaction L-asparagine + H2O = L-aspartate + NH4(+). It catalyses the reaction Cleavage of a beta-linked Asp residue from the N-terminus of a polypeptide.. Its function is as follows. Has both L-asparaginase and beta-aspartyl peptidase activity. Does not have aspartylglucosaminidase activity and is inactive toward GlcNAc-L-Asn. Likewise, has no activity toward glutamine. This Drosophila melanogaster (Fruit fly) protein is Probable isoaspartyl peptidase/L-asparaginase CG7860.